A 257-amino-acid polypeptide reads, in one-letter code: Cytochrome c oxidase subunit 3 (257 aa).

Transmembrane regions (helical) follow at residues 13–33, 36–56, 80–100, 154–174, 195–215, and 237–257; these read PWPI…VSYF, LSMY…FQWW, GMIL…WAFF, YISA…FTMF, FFMT…FLLV, and AWYW…MYWW.

It belongs to the cytochrome c oxidase subunit 3 family. As to quaternary structure, component of the cytochrome c oxidase (complex IV, CIV), a multisubunit enzyme composed of a catalytic core of 3 subunits and several supernumerary subunits. The complex exists as a monomer or a dimer and forms supercomplexes (SCs) in the inner mitochondrial membrane with ubiquinol-cytochrome c oxidoreductase (cytochrome b-c1 complex, complex III, CIII).

Its subcellular location is the mitochondrion inner membrane. It catalyses the reaction 4 Fe(II)-[cytochrome c] + O2 + 8 H(+)(in) = 4 Fe(III)-[cytochrome c] + 2 H2O + 4 H(+)(out). Component of the cytochrome c oxidase, the last enzyme in the mitochondrial electron transport chain which drives oxidative phosphorylation. The respiratory chain contains 3 multisubunit complexes succinate dehydrogenase (complex II, CII), ubiquinol-cytochrome c oxidoreductase (cytochrome b-c1 complex, complex III, CIII) and cytochrome c oxidase (complex IV, CIV), that cooperate to transfer electrons derived from NADH and succinate to molecular oxygen, creating an electrochemical gradient over the inner membrane that drives transmembrane transport and the ATP synthase. Cytochrome c oxidase is the component of the respiratory chain that catalyzes the reduction of oxygen to water. Electrons originating from reduced cytochrome c in the intermembrane space (IMS) are transferred via the dinuclear copper A center (CU(A)) of subunit 2 and heme A of subunit 1 to the active site in subunit 1, a binuclear center (BNC) formed by heme A3 and copper B (CU(B)). The BNC reduces molecular oxygen to 2 water molecules using 4 electrons from cytochrome c in the IMS and 4 protons from the mitochondrial matrix. In Rhipicephalus sanguineus (Brown dog tick), this protein is Cytochrome c oxidase subunit 3 (COIII).